An 87-amino-acid chain; its full sequence is Small ribosomal subunit protein bS20 (87 aa).

Belongs to the bacterial ribosomal protein bS20 family.

Functionally, binds directly to 16S ribosomal RNA. The sequence is that of Small ribosomal subunit protein bS20 from Rickettsia bellii (strain OSU 85-389).